The following is a 354-amino-acid chain: Coiled-coil domain-containing protein 86 (354 aa).

A disordered region spans residues methionine 1–valine 354. A phosphoserine mark is found at serine 18 and serine 24. The span at valine 31–glutamate 44 shows a compositional bias: basic and acidic residues. Serine 47 and serine 53 each carry phosphoserine. Over residues proline 49–proline 58 the composition is skewed to low complexity. Threonine 60 bears the Phosphothreonine mark. Phosphoserine occurs at positions 61, 64, 75, 86, 105, 108, 123, and 183. Residues phenylalanine 97 to glutamate 107 are compositionally biased toward polar residues. The segment covering proline 199–glycine 211 has biased composition (basic and acidic residues). Residues serine 212 and serine 213 each carry the phosphoserine modification. Residues glycine 232–phenylalanine 248 are compositionally biased toward basic residues. Composition is skewed to basic and acidic residues over residues aspartate 267–arginine 289 and alanine 297–glutamate 311. A coiled-coil region spans residues alanine 274–arginine 317. Basic residues predominate over residues alanine 320–leucine 330. Arginine 336 carries the post-translational modification Citrulline.

Citrullinated by PADI4.

The protein resides in the nucleus. It is found in the chromosome. It localises to the nucleolus. In terms of biological role, required for proper chromosome segregation during mitosis and error-free mitotic progression. The protein is Coiled-coil domain-containing protein 86 of Bos taurus (Bovine).